A 268-amino-acid polypeptide reads, in one-letter code: Glutamate racemase (268 aa).

Residues 10–11 and 42–43 each bind substrate; these read DS and YG. C73 (proton donor/acceptor) is an active-site residue. 74-75 serves as a coordination point for substrate; the sequence is NT. The Proton donor/acceptor role is filled by C184. 185–186 provides a ligand contact to substrate; it reads TH.

The protein belongs to the aspartate/glutamate racemases family.

It carries out the reaction L-glutamate = D-glutamate. Its pathway is cell wall biogenesis; peptidoglycan biosynthesis. Functionally, provides the (R)-glutamate required for cell wall biosynthesis. The sequence is that of Glutamate racemase from Limosilactobacillus fermentum (strain NBRC 3956 / LMG 18251) (Lactobacillus fermentum).